The following is a 990-amino-acid chain: Importin beta-like protein kap111 (990 aa).

The protein belongs to the importin beta family.

It is found in the nucleus. In terms of biological role, functions as a component of the nuclear pore complex (NPC). NPC components, collectively referred to as nucleoporins (NUPs), can play the role of both NPC structural components and of docking or interaction partners for transiently associated nuclear transport factors. Active directional transport is assured by both, a Phe-Gly (FG) repeat affinity gradient for these transport factors across the NPC and a transport cofactor concentration gradient across the nuclear envelope. The sequence is that of Importin beta-like protein kap111 (kap111) from Schizosaccharomyces pombe (strain 972 / ATCC 24843) (Fission yeast).